The following is a 548-amino-acid chain: Aspergilol synthase AuAP450 (548 aa).

A helical membrane pass occupies residues 38–58 (PQLVITTLGALLLAAFYLLPS). Cys-489 is a heme binding site.

Belongs to the cytochrome P450 family. The cofactor is heme.

The protein resides in the membrane. It participates in secondary metabolite biosynthesis; terpenoid biosynthesis. Its function is as follows. Cytochrome P450 monooxygenase; part of the gene cluster that mediates the biosynthesis of aspergiltriene A, aspergildienes A-D and aspergilols A-D. The bifunctional terpene synthase AuAS converts DMAPP and IPP into sesterterpenes. The C-terminal prenyltransferase (PT) domain of AuAS catalyzes formation of GFPP, whereas the N-terminal terpene cyclase (TC) domain catalyzes the cyclization of GFPP into 5 distinct sesterterpenes: aspergiltriene A, aspergildiene A, aspergildiene B, aspergildiene C and aspergildiene D. The cytochrome P450 monooxygenase AP450 then hydroxylates the aspergildienes A, B, C and D to yield the corresponding sesterterpene alcohols, aspergilols A-D. In Aspergillus ustus, this protein is Aspergilol synthase AuAP450.